The primary structure comprises 314 residues: DNA-directed RNA polymerase subunit alpha (314 aa).

The tract at residues Met-1 to Thr-228 is alpha N-terminal domain (alpha-NTD). Residues Lys-245 to Glu-314 form an alpha C-terminal domain (alpha-CTD) region.

This sequence belongs to the RNA polymerase alpha chain family. In terms of assembly, homodimer. The RNAP catalytic core consists of 2 alpha, 1 beta, 1 beta' and 1 omega subunit. When a sigma factor is associated with the core the holoenzyme is formed, which can initiate transcription.

It carries out the reaction RNA(n) + a ribonucleoside 5'-triphosphate = RNA(n+1) + diphosphate. DNA-dependent RNA polymerase catalyzes the transcription of DNA into RNA using the four ribonucleoside triphosphates as substrates. In Shouchella clausii (strain KSM-K16) (Alkalihalobacillus clausii), this protein is DNA-directed RNA polymerase subunit alpha.